The sequence spans 495 residues: uncharacterized protein (495 aa).

It is found in the cytoplasm. The protein localises to the nucleus. This is an uncharacterized protein from Saccharomyces cerevisiae (strain ATCC 204508 / S288c) (Baker's yeast).